A 283-amino-acid chain; its full sequence is MGSAGLIEIKRRIKSVESTRKITNAMGLVATSKLRKTRKELFINKKFFEETEKIIEKLASTISQDDDSIYFKSNKSKYKLYILVSSDTGLCGSYNNTVVSYLDSLVRDEKENIKVITVGSKGLSYVKRIGLDTIADYVDIPDIPTVKEVKIVFESALKMYKDGEVSEINVAYLDFVSPVKQEPKAEKLLPIEKITSVPEEFITEPNSEEVLNNALNIHLKGKFRNILLSAKCSEQSSRMTAMNGATQNANDILDNLNLKYNRIRQQIITQEISEIVGGAEAQK.

The protein belongs to the ATPase gamma chain family. As to quaternary structure, F-type ATPases have 2 components, CF(1) - the catalytic core - and CF(0) - the membrane proton channel. CF(1) has five subunits: alpha(3), beta(3), gamma(1), delta(1), epsilon(1). CF(0) has three main subunits: a, b and c.

The protein localises to the cell membrane. Its function is as follows. Produces ATP from ADP in the presence of a proton gradient across the membrane. The gamma chain is believed to be important in regulating ATPase activity and the flow of protons through the CF(0) complex. The sequence is that of ATP synthase gamma chain from Clostridium botulinum (strain Eklund 17B / Type B).